A 384-amino-acid polypeptide reads, in one-letter code: Anhydro-N-acetylmuramic acid kinase (384 aa).

Position 17 to 24 (17 to 24) interacts with ATP; sequence GTSMDGVD.

Belongs to the anhydro-N-acetylmuramic acid kinase family.

It catalyses the reaction 1,6-anhydro-N-acetyl-beta-muramate + ATP + H2O = N-acetyl-D-muramate 6-phosphate + ADP + H(+). The protein operates within amino-sugar metabolism; 1,6-anhydro-N-acetylmuramate degradation. It functions in the pathway cell wall biogenesis; peptidoglycan recycling. Catalyzes the specific phosphorylation of 1,6-anhydro-N-acetylmuramic acid (anhMurNAc) with the simultaneous cleavage of the 1,6-anhydro ring, generating MurNAc-6-P. Is required for the utilization of anhMurNAc either imported from the medium or derived from its own cell wall murein, and thus plays a role in cell wall recycling. This Burkholderia thailandensis (strain ATCC 700388 / DSM 13276 / CCUG 48851 / CIP 106301 / E264) protein is Anhydro-N-acetylmuramic acid kinase.